Consider the following 586-residue polypeptide: Phosphomethylpyrimidine synthase (586 aa).

The disordered stretch occupies residues 1–58 (MKQSVSAEQIELKSSLPGSKKVYVDGTREGMKVPMREIEQSDTNGVQNPPIRVYDTSG). The segment covering 22-39 (VYVDGTREGMKVPMREIE) has biased composition (basic and acidic residues). Substrate is bound by residues Asn-193, Met-222, Tyr-251, His-287, 307–309 (SRG), 348–351 (DGLR), and Glu-387. Zn(2+) is bound at residue His-391. Tyr-414 contacts substrate. His-455 contributes to the Zn(2+) binding site. Residues Cys-535, Cys-538, and Cys-543 each contribute to the [4Fe-4S] cluster site.

Belongs to the ThiC family. [4Fe-4S] cluster is required as a cofactor.

It catalyses the reaction 5-amino-1-(5-phospho-beta-D-ribosyl)imidazole + S-adenosyl-L-methionine = 4-amino-2-methyl-5-(phosphooxymethyl)pyrimidine + CO + 5'-deoxyadenosine + formate + L-methionine + 3 H(+). It participates in cofactor biosynthesis; thiamine diphosphate biosynthesis. Functionally, catalyzes the synthesis of the hydroxymethylpyrimidine phosphate (HMP-P) moiety of thiamine from aminoimidazole ribotide (AIR) in a radical S-adenosyl-L-methionine (SAM)-dependent reaction. This is Phosphomethylpyrimidine synthase from Bacillus mycoides (strain KBAB4) (Bacillus weihenstephanensis).